The chain runs to 726 residues: Catalase-peroxidase (726 aa).

The interval 1-33 (MSTSDDIHNTTATGKCPFHQGGHDQSAGAGTTT) is disordered. A cross-link (tryptophyl-tyrosyl-methioninium (Trp-Tyr) (with M-252)) is located at residues 105–226 (WHGAGTYRSI…LGATEMGLIY (122 aa)). The active-site Proton acceptor is the His-106. The segment at residues 226-252 (YVNPEGPDHSGEPLSAAAAIRATFGNM) is a cross-link (tryptophyl-tyrosyl-methioninium (Tyr-Met) (with W-105)). His-267 is a binding site for heme b.

This sequence belongs to the peroxidase family. Peroxidase/catalase subfamily. As to quaternary structure, homodimer or homotetramer. Heme b serves as cofactor. Formation of the three residue Trp-Tyr-Met cross-link is important for the catalase, but not the peroxidase activity of the enzyme.

It carries out the reaction H2O2 + AH2 = A + 2 H2O. The catalysed reaction is 2 H2O2 = O2 + 2 H2O. Its function is as follows. Bifunctional enzyme with both catalase and broad-spectrum peroxidase activity. This is Catalase-peroxidase from Shigella sonnei (strain Ss046).